A 483-amino-acid polypeptide reads, in one-letter code: Cysteine--tRNA ligase (483 aa).

Cysteine 29 is a Zn(2+) binding site. The short motif at 31 to 41 is the 'HIGH' region element; sequence PTVYGHAHLGH. Residues cysteine 221, histidine 246, and glutamate 250 each coordinate Zn(2+). The short motif at 278–282 is the 'KMSKS' region element; that stretch reads KMGKS. ATP is bound at residue lysine 281.

This sequence belongs to the class-I aminoacyl-tRNA synthetase family. As to quaternary structure, monomer. Zn(2+) serves as cofactor.

The protein localises to the cytoplasm. The catalysed reaction is tRNA(Cys) + L-cysteine + ATP = L-cysteinyl-tRNA(Cys) + AMP + diphosphate. The polypeptide is Cysteine--tRNA ligase (Chlorobium luteolum (strain DSM 273 / BCRC 81028 / 2530) (Pelodictyon luteolum)).